The sequence spans 278 residues: 3-methyl-2-oxobutanoate hydroxymethyltransferase (278 aa).

Mg(2+)-binding residues include Asp-49 and Asp-88. 3-methyl-2-oxobutanoate is bound by residues 49-50 (DS), Asp-88, and Lys-118. A Mg(2+)-binding site is contributed by Glu-120. Glu-186 acts as the Proton acceptor in catalysis.

The protein belongs to the PanB family. In terms of assembly, homodecamer; pentamer of dimers. Mg(2+) serves as cofactor.

The protein resides in the cytoplasm. The enzyme catalyses 3-methyl-2-oxobutanoate + (6R)-5,10-methylene-5,6,7,8-tetrahydrofolate + H2O = 2-dehydropantoate + (6S)-5,6,7,8-tetrahydrofolate. The protein operates within cofactor biosynthesis; (R)-pantothenate biosynthesis; (R)-pantoate from 3-methyl-2-oxobutanoate: step 1/2. In terms of biological role, catalyzes the reversible reaction in which hydroxymethyl group from 5,10-methylenetetrahydrofolate is transferred onto alpha-ketoisovalerate to form ketopantoate. The polypeptide is 3-methyl-2-oxobutanoate hydroxymethyltransferase (Bordetella parapertussis (strain 12822 / ATCC BAA-587 / NCTC 13253)).